We begin with the raw amino-acid sequence, 127 residues long: Ribonuclease P protein component 1 (127 aa).

This sequence belongs to the eukaryotic/archaeal RNase P protein component 1 family. Consists of a catalytic RNA component and at least 4 protein subunits. Forms a subcomplex with Rnp4 which stimulates the catalytic RNA.

It localises to the cytoplasm. It catalyses the reaction Endonucleolytic cleavage of RNA, removing 5'-extranucleotides from tRNA precursor.. Functionally, part of ribonuclease P, a protein complex that generates mature tRNA molecules by cleaving their 5'-ends. The RNA is catalytic, but its KM for pre-tRNA is 170-fold decreased in the presence of the 4 known protein subunits (Rnp1-4). The protein subunits also decrease the amount of Mg(2+) needed for activity. The polypeptide is Ribonuclease P protein component 1 (Pyrococcus furiosus (strain ATCC 43587 / DSM 3638 / JCM 8422 / Vc1)).